The sequence spans 578 residues: Protein O-linked-mannose beta-1,4-N-acetylglucosaminyltransferase 2 (578 aa).

The Cytoplasmic portion of the chain corresponds to 1–4 (MNIS). A helical; Signal-anchor for type II membrane protein membrane pass occupies residues 5-25 (AVFSALLVSIMAAVLWKHVKL). Residues 26–578 (LDQFYVIEEE…PFAEVLVCST (553 aa)) lie on the Lumenal side of the membrane. N-linked (GlcNAc...) asparagine glycans are attached at residues asparagine 98, asparagine 275, asparagine 335, asparagine 451, asparagine 541, and asparagine 563. The 95-residue stretch at 484 to 578 (RESKCQASAQ…PFAEVLVCST (95 aa)) folds into the Fibronectin type-III domain.

Belongs to the glycosyltransferase 61 family.

The protein resides in the endoplasmic reticulum membrane. It catalyses the reaction 3-O-(alpha-D-mannosyl)-L-threonyl-[protein] + UDP-N-acetyl-alpha-D-glucosamine = 3-O-(N-acetyl-beta-D-glucosaminyl-(1-&gt;4)-alpha-D-mannosyl)-L-threonyl-[protein] + UDP + H(+). The protein operates within protein modification; protein glycosylation. Its function is as follows. O-linked mannose beta-1,4-N-acetylglucosaminyltransferase that transfers UDP-N-acetyl-D-glucosamine to the 4-position of the mannose to generate N-acetyl-D-glucosamine-beta-1,4-O-D-mannosylprotein. Involved in the biosynthesis of the phosphorylated O-mannosyl trisaccharide (N-acetylgalactosamine-beta-3-N-acetylglucosamine-beta-4-(phosphate-6-)mannose), a carbohydrate structure present in alpha-dystroglycan (DAG1), which is required for binding laminin G-like domain-containing extracellular proteins with high affinity. The protein is Protein O-linked-mannose beta-1,4-N-acetylglucosaminyltransferase 2 (pomgnt2) of Xenopus laevis (African clawed frog).